Reading from the N-terminus, the 674-residue chain is Dymeclin (674 aa).

The N-myristoyl glycine moiety is linked to residue Gly2.

It belongs to the dymeclin family. Interacts with GOLM1 and PPIB. Myristoylated in vitro; myristoylation is not essential for protein targeting to Golgi compartment.

It localises to the cytoplasm. Its subcellular location is the golgi apparatus. The protein localises to the membrane. Functionally, necessary for correct organization of Golgi apparatus. Involved in bone development. The polypeptide is Dymeclin (Dym) (Rattus norvegicus (Rat)).